We begin with the raw amino-acid sequence, 931 residues long: Netrin receptor UNC5C (931 aa).

The signal sequence occupies residues Met-1–Ala-39. Topologically, residues Ala-40 to Tyr-380 are extracellular. One can recognise an Ig-like domain in the interval Pro-62–Tyr-159. 9 disulfide bridges follow: Cys-83–Cys-144, Cys-95–Cys-142, Cys-188–Cys-239, Cys-272–Cys-309, Cys-276–Cys-313, Cys-287–Cys-299, Cys-328–Cys-362, Cys-332–Cys-367, and Cys-340–Cys-352. The Ig-like C2-type domain occupies Arg-161–Ile-256. A glycan (N-linked (GlcNAc...) asparagine) is linked at Asn-236. 2 TSP type-1 domains span residues Asn-260–Pro-314 and Asp-316–Met-368. Asn-361 carries an N-linked (GlcNAc...) asparagine glycan. A helical transmembrane segment spans residues Val-381–Val-401. The Cytoplasmic portion of the chain corresponds to Tyr-402–Tyr-931. In terms of domain architecture, ZU5 spans Cys-530–Leu-664. One can recognise a Death domain in the interval Gln-850–Gly-929.

The protein belongs to the unc-5 family. In terms of tissue distribution, restricted to proprioceptive neurons.

It is found in the cell membrane. Its subcellular location is the cell surface. The protein localises to the synapse. The protein resides in the synaptosome. It localises to the cell projection. It is found in the axon. Its subcellular location is the dendrite. The protein localises to the growth cone. The protein resides in the lamellipodium. It localises to the filopodium. In terms of biological role, receptor for netrin required for axon guidance. Mediates axon repulsion of neuronal growth cones in the developing nervous system upon ligand binding. Involved in dorsal root ganglion axon projection towards the spinal cord. This Gallus gallus (Chicken) protein is Netrin receptor UNC5C (UNC5C).